We begin with the raw amino-acid sequence, 560 residues long: Calcium-binding and coiled-coil domain-containing protein 1-A (560 aa).

Coiled-coil stretches lie at residues K156–I192 and W367–L480. Positions L480–S517 are disordered. Residues S487–L496 show a composition bias toward low complexity.

The protein belongs to the CALCOCO family.

The protein localises to the cytoplasm. Its subcellular location is the nucleus. Functionally, may function as a coactivator for aryl hydrocarbon and nuclear receptors. This chain is Calcium-binding and coiled-coil domain-containing protein 1-A (calcoco1-a), found in Xenopus laevis (African clawed frog).